Consider the following 498-residue polypeptide: ATP synthase subunit beta, chloroplastic (498 aa).

Thr-6 is modified (phosphothreonine). Residue Ser-13 is modified to Phosphoserine. Gly-172–Thr-179 is a binding site for ATP.

The protein belongs to the ATPase alpha/beta chains family. As to quaternary structure, F-type ATPases have 2 components, CF(1) - the catalytic core - and CF(0) - the membrane proton channel. CF(1) has five subunits: alpha(3), beta(3), gamma(1), delta(1), epsilon(1). CF(0) has four main subunits: a(1), b(1), b'(1) and c(9-12).

The protein localises to the plastid. Its subcellular location is the chloroplast thylakoid membrane. It carries out the reaction ATP + H2O + 4 H(+)(in) = ADP + phosphate + 5 H(+)(out). Its function is as follows. Produces ATP from ADP in the presence of a proton gradient across the membrane. The catalytic sites are hosted primarily by the beta subunits. The chain is ATP synthase subunit beta, chloroplastic from Capsella bursa-pastoris (Shepherd's purse).